A 298-amino-acid chain; its full sequence is Movement protein BC1 (298 aa).

A disordered region spans residues 253–273 (LPEASLDPGDSVSQTQSMTKK).

It belongs to the begomovirus movement protein BC1 family. Binds to dimeric supercoiled plasmid DNA. In terms of processing, phosphorylated.

The protein resides in the host cell membrane. It localises to the host microsome membrane. The protein localises to the host endoplasmic reticulum membrane. Transports viral genome to neighboring plant cells directly through plasmosdesmata, without any budding. The movement protein allows efficient cell to cell propagation, by bypassing the host cell wall barrier. Begomovirus genome is shuttled out of nucleus by Nuclear shuttle protein (NSP) and the movement protein transports the DNA-NSP complex to cell plasmodesmata and facilitates further movement across the cell wall. This Hewittia sublobata (Coralbush) protein is Movement protein BC1.